A 676-amino-acid polypeptide reads, in one-letter code: ATP-dependent zinc metalloprotease FTSH 2, chloroplastic (676 aa).

A chloroplast-targeting transit peptide spans 1–32; the sequence is MAPTSMSLAAKTPLPFSTLPSSGVAQRPVSVT. The helical transmembrane segment at 155-175 threads the bilayer; it reads LLFNLIGNLAFPLILIGGLFL. 254–261 provides a ligand contact to ATP; that stretch reads GPPGTGKT. Zn(2+) is bound at residue His475. Glu476 is an active-site residue. Zn(2+) is bound by residues His479 and Asp553.

It in the N-terminal section; belongs to the AAA ATPase family. The protein in the C-terminal section; belongs to the peptidase M41 family. Requires Zn(2+) as cofactor.

Its subcellular location is the plastid. The protein resides in the chloroplast thylakoid membrane. In terms of biological role, probable ATP-dependent zinc metallopeptidase. This is ATP-dependent zinc metalloprotease FTSH 2, chloroplastic (FTSH2) from Oryza sativa subsp. japonica (Rice).